Consider the following 473-residue polypeptide: Bestrophin-4 (473 aa).

Topologically, residues 1–31 are cytoplasmic; the sequence is MTVSYTLKVAEARFGGFSGLLLRWRGSIYKL. Alanine 10 contacts Ca(2+). A helical transmembrane segment spans residues 32–51; the sequence is LYKEFLLFGALYAVLSITYR. Residues 52-60 lie on the Extracellular side of the membrane; that stretch reads LLLTQEQRY. The chain crosses the membrane as a helical span at residues 61-82; sequence VYAQVARYCNRSADLIPLSFVL. The Cytoplasmic segment spans residues 83 to 237; the sequence is GFYVTLVVNR…DWISIPLVYT (155 aa). Residues 238–255 form a helical membrane-spanning segment; the sequence is QVVTIAVYSFFALSLVGR. Topologically, residues 256–289 are extracellular; the sequence is QFVEPEAGAAKPQKLLKPGQEPAPALGDPDMYVP. A helical transmembrane segment spans residues 290 to 303; sequence LTTLLQFFFYAGWL. Topologically, residues 304 to 473 are cytoplasmic; the sequence is KVAEQIINPF…AESGDEALEP (170 aa). Residues glutamine 308, asparagine 311, aspartate 316, and aspartate 319 each coordinate Ca(2+). 2 disordered regions span residues 379 to 408 and 428 to 473; these read TFNLRMSDDPEQSLQVEASPGSGRPAPAAQ and RNFG…ALEP. The segment covering 396 to 407 has biased composition (low complexity); that stretch reads ASPGSGRPAPAA. The span at 445-461 shows a compositional bias: basic and acidic residues; it reads FRAEEGGDPEAAARIEE. The segment covering 462-473 has biased composition (acidic residues); the sequence is ESAESGDEALEP.

The protein belongs to the anion channel-forming bestrophin (TC 1.A.46) family. Calcium-sensitive chloride channel subfamily. As to expression, predominantly found in colon and the weakly in fetal brain, spinal cord, retina, lung, trachea, testis and placenta.

It is found in the cell membrane. The enzyme catalyses chloride(in) = chloride(out). It carries out the reaction hydrogencarbonate(in) = hydrogencarbonate(out). Ligand-gated anion channel that allows the movement of anions across cell membranes when activated by Calcium (Ca2+). Mediates the movement of hydrogencarbonate and chloride. The polypeptide is Bestrophin-4 (Homo sapiens (Human)).